A 149-amino-acid polypeptide reads, in one-letter code: D-aminoacyl-tRNA deacylase (149 aa).

Residues 137-138 (GP) carry the Gly-cisPro motif, important for rejection of L-amino acids motif.

Belongs to the DTD family. In terms of assembly, homodimer.

The protein localises to the cytoplasm. The catalysed reaction is glycyl-tRNA(Ala) + H2O = tRNA(Ala) + glycine + H(+). The enzyme catalyses a D-aminoacyl-tRNA + H2O = a tRNA + a D-alpha-amino acid + H(+). Its function is as follows. An aminoacyl-tRNA editing enzyme that deacylates mischarged D-aminoacyl-tRNAs. Also deacylates mischarged glycyl-tRNA(Ala), protecting cells against glycine mischarging by AlaRS. Acts via tRNA-based rather than protein-based catalysis; rejects L-amino acids rather than detecting D-amino acids in the active site. By recycling D-aminoacyl-tRNA to D-amino acids and free tRNA molecules, this enzyme counteracts the toxicity associated with the formation of D-aminoacyl-tRNA entities in vivo and helps enforce protein L-homochirality. This Clostridium botulinum (strain Kyoto / Type A2) protein is D-aminoacyl-tRNA deacylase.